The following is a 152-amino-acid chain: Ribosome maturation factor RimP (152 aa).

Belongs to the RimP family.

It localises to the cytoplasm. Functionally, required for maturation of 30S ribosomal subunits. This is Ribosome maturation factor RimP from Burkholderia lata (strain ATCC 17760 / DSM 23089 / LMG 22485 / NCIMB 9086 / R18194 / 383).